The following is a 437-amino-acid chain: MSMFLDTAKISVQAGRGGDGMVAFRREKYVPNGGPWGGDGGKGGSVIFRVDEGLRTLMDFRYNRKFKAKSGEKGMTKGMHGRGAEDLIVFVPQGTTVRDAETGKVITDLVEHGQEVVIAKGGRGGRGNIRFATPRNPAPEIAENGEPGEERQLELELKILADVGLVGFPSVGKSTLLSVVSSAKPKIGAYHFTTIVPNLGMVRTKSGDSFAMADLPGLIEGASQGIGLGTQFLRHIERTRVILHVIDMSASEGRDPYEDYVSINNELETYNLRLMERPQIIVANKMDMPEAQENLKAFKKKLAAQYDEFDDLPMIFPISSLAHQGLENLLEATAELLAKTDEFLLYDEADLVDEEAYYGFAETEKDFEITRDDDATWVLSGEKLERLFVMTNMERDESIMKFARQLRGMGVDEALRERGAKDGDPVRIGKFEFEFVD.

Residues 2 to 160 (SMFLDTAKIS…RQLELELKIL (159 aa)) form the Obg domain. An OBG-type G domain is found at 161–338 (ADVGLVGFPS…LLEATAELLA (178 aa)). Residues 167–174 (GFPSVGKS), 192–196 (FTTIV), 214–217 (DLPG), 284–287 (NKMD), and 319–321 (SSL) each bind GTP. Mg(2+) is bound by residues serine 174 and threonine 194. The 79-residue stretch at 359–437 (GFAETEKDFE…IGKFEFEFVD (79 aa)) folds into the OCT domain.

This sequence belongs to the TRAFAC class OBG-HflX-like GTPase superfamily. OBG GTPase family. In terms of assembly, monomer. Mg(2+) serves as cofactor.

It localises to the cytoplasm. Functionally, an essential GTPase which binds GTP, GDP and possibly (p)ppGpp with moderate affinity, with high nucleotide exchange rates and a fairly low GTP hydrolysis rate. Plays a role in control of the cell cycle, stress response, ribosome biogenesis and in those bacteria that undergo differentiation, in morphogenesis control. In Streptococcus pyogenes serotype M5 (strain Manfredo), this protein is GTPase Obg.